A 583-amino-acid chain; its full sequence is Vivapain-1 (583 aa).

Residues 1–34 (MAQDIKIMNLTKSSLEALNRNQMLSKKSSRKILK) lie on the Cytoplasmic side of the membrane. Residues 1-338 (MAQDIKIMNL…SSSGANLLAD (338 aa)) constitute a propeptide, activation peptide. Residues 35–55 (ICMYAILTFAMCGVVLICLTA) traverse the membrane as a helical; Signal-anchor for type II membrane protein segment. Residues 56–583 (MSNSDGSLTQ…IGVEVFYPIL (528 aa)) lie on the Lumenal side of the membrane. Residues 62-82 (SLTQSGSHNQSGSLKGLSSTP) are compositionally biased toward polar residues. Disordered regions lie at residues 62–83 (SLTQ…STPG) and 104–125 (PHGN…ALPN). The N-linked (GlcNAc...) asparagine glycan is linked to N70. The span at 106–119 (GNRDPTGDDVEKPA) shows a compositional bias: basic and acidic residues. N195 and N272 each carry an N-linked (GlcNAc...) asparagine glycan. Disulfide bonds link C360–C402, C395–C435, and C420–C440. C363 is a catalytic residue. N381 carries an N-linked (GlcNAc...) asparagine glycan. 2 N-linked (GlcNAc...) asparagine glycosylation sites follow: N486 and N494. A disulfide bridge connects residues C489 and C572. Active-site residues include H495 and N547.

Belongs to the peptidase C1 family.

It localises to the membrane. Its function is as follows. Cysteine protease. In Plasmodium vivax (strain Salvador I), this protein is Vivapain-1.